We begin with the raw amino-acid sequence, 200 residues long: Dephospho-CoA kinase (200 aa).

Positions 3–200 (VLGLTGSIGM…LSGKPAAATR (198 aa)) constitute a DPCK domain. ATP is bound at residue 11 to 16 (GMGKTT).

It belongs to the CoaE family.

The protein resides in the cytoplasm. The enzyme catalyses 3'-dephospho-CoA + ATP = ADP + CoA + H(+). The protein operates within cofactor biosynthesis; coenzyme A biosynthesis; CoA from (R)-pantothenate: step 5/5. In terms of biological role, catalyzes the phosphorylation of the 3'-hydroxyl group of dephosphocoenzyme A to form coenzyme A. The protein is Dephospho-CoA kinase of Brucella abortus (strain 2308).